The sequence spans 693 residues: Iron-sulfur clusters transporter atm1, mitochondrial (693 aa).

The N-terminal 28 residues, 1–28, are a transit peptide targeting the mitochondrion; the sequence is MLERCPWKLISSPRNIPARSFLNSRGTY. Residues 29–118 lie on the Mitochondrial matrix side of the membrane; that stretch reads LVLRKSNILP…PKGKTNLKVR (90 aa). Residues 119 to 140 form a helical membrane-spanning segment; the sequence is VVSALALLVAAKILNVQVPFYF. In terms of domain architecture, ABC transmembrane type-1 spans 119–409; sequence VVSALALLVA…LGSVYREMRQ (291 aa). Residues 141–163 lie on the Mitochondrial intermembrane side of the membrane; it reads KSIIDTMNTTLVQEVGALWSTVG. Residues 164-187 traverse the membrane as a helical segment; sequence AVVLGYGFARIFSTVFQELRNSVF. Over 188 to 236 the chain is Mitochondrial matrix; the sequence is AIVSQSAIRSVSSNVYQHLLNLDMNFHLSKQTGSITRAMDRGTKGISFI. The chain crosses the membrane as a helical span at residues 237–260; sequence LSSMVLHIIPITLEIAMVSGILTY. A topological domain (mitochondrial intermembrane) is located at residue lysine 261. The helical transmembrane segment at 262–282 threads the bilayer; it reads YGPSFSAIAATTVALYALFTV. The Mitochondrial matrix portion of the chain corresponds to 283-348; that stretch reads RTTSWRTVFR…ANVKVASSLA (66 aa). Residues 288–292 and 351–354 each bind glutathione; these read RTVFR and NSGQ. Residues 349–367 traverse the membrane as a helical segment; sequence FLNSGQAIIFSTALTLMMY. At 368–382 the chain is on the mitochondrial intermembrane side; the sequence is MGCRGIVTSNLTVGD. The chain crosses the membrane as a helical span at residues 383 to 404; it reads LVMINQLVFQLSIPLNFLGSVY. A glutathione-binding site is contributed by glycine 401. Residues 405-693 are Mitochondrial matrix-facing; the sequence is REMRQAFTDM…FGESNKSGDA (289 aa). In terms of domain architecture, ABC transporter spans 443–679; it reads IQFDNVHFSY…NSVYTSMWHS (237 aa). ATP contacts are provided by residues tyrosine 452 and 476-487; that span reads GASGCGKSTILR.

Belongs to the ABC transporter superfamily. ABCB family. Heavy Metal importer (TC 3.A.1.210) subfamily. As to quaternary structure, homodimer.

It localises to the mitochondrion inner membrane. Functionally, performs an essential function in the generation of cytoplasmic iron-sulfur proteins by mediating the ATP-dependent export of Fe/S cluster precursors synthesized by nfs1 and other mitochondrial proteins. Hydrolyzes ATP. Binds glutathione and may function by transporting a glutathione-conjugated iron-sulfur compound. In Schizosaccharomyces pombe (strain 972 / ATCC 24843) (Fission yeast), this protein is Iron-sulfur clusters transporter atm1, mitochondrial.